Here is a 274-residue protein sequence, read N- to C-terminus: Trypsin-1 (274 aa).

The N-terminal stretch at 1–18 (MSNKIAILLAVLVAVVAC) is a signal peptide. Residues 19-47 (AEAQANQRHRLVRPSPSFSPRPRYAVGQR) constitute a propeptide, activation peptide. A Peptidase S1 domain is found at 48–273 (IVGGFEIDVS…VRDWVRENSG (226 aa)). Cys73 and Cys89 are joined by a disulfide. Active-site charge relay system residues include His88 and Asp133. Intrachain disulfides connect Cys198–Cys214 and Cys225–Cys249. The active-site Charge relay system is Ser229.

The protein belongs to the peptidase S1 family. As to expression, constitutively expressed at low level in the gut of adult females. Also expressed in the gut of male and female pupae.

It is found in the secreted. The enzyme catalyses Preferential cleavage: Arg-|-Xaa, Lys-|-Xaa.. In terms of biological role, major function may be to aid in digestion of the blood meal. The polypeptide is Trypsin-1 (TRYP1) (Anopheles gambiae (African malaria mosquito)).